Consider the following 319-residue polypeptide: tRNA-cytidine(32) 2-sulfurtransferase (319 aa).

A PP-loop motif motif is present at residues 43–48 (SGGKDS). [4Fe-4S] cluster-binding residues include Cys118, Cys121, and Cys209.

It belongs to the TtcA family. Homodimer. The cofactor is Mg(2+). Requires [4Fe-4S] cluster as cofactor.

Its subcellular location is the cytoplasm. The enzyme catalyses cytidine(32) in tRNA + S-sulfanyl-L-cysteinyl-[cysteine desulfurase] + AH2 + ATP = 2-thiocytidine(32) in tRNA + L-cysteinyl-[cysteine desulfurase] + A + AMP + diphosphate + H(+). The protein operates within tRNA modification. Functionally, catalyzes the ATP-dependent 2-thiolation of cytidine in position 32 of tRNA, to form 2-thiocytidine (s(2)C32). The sulfur atoms are provided by the cysteine/cysteine desulfurase (IscS) system. The sequence is that of tRNA-cytidine(32) 2-sulfurtransferase from Neisseria gonorrhoeae (strain NCCP11945).